The following is a 94-amino-acid chain: Ubiquitin-like protein ATG12B (94 aa).

Residue Ala-2 is modified to N-acetylalanine. A Glycyl lysine isopeptide (Gly-Lys) (interchain with K-128 in ATG5) cross-link involves residue Gly-94.

Belongs to the ATG12 family. Ubiquitous.

The protein localises to the cytoplasm. In terms of biological role, ubiquitin-like protein involved in cytoplasm to vacuole transport (Cvt) and autophagy vesicles formation. Conjugation with ATG5 through a ubiquitin-like conjugating system involving also ATG7 as an E1-like activating enzyme and ATG10 as an E2-like conjugating enzyme, is essential for its function. ATG12/ATG5 conjugate has an essential role in plant nutrient recycling. The chain is Ubiquitin-like protein ATG12B (ATG12B) from Arabidopsis thaliana (Mouse-ear cress).